A 572-amino-acid chain; its full sequence is Phenylalanine--tRNA ligase beta subunit (572 aa).

In terms of domain architecture, B5 spans 278–353 (LTPKEFEVEF…IAYGYNEIKP (76 aa)). 4 residues coordinate Mg(2+): aspartate 331, aspartate 337, glutamate 340, and aspartate 341.

The protein belongs to the phenylalanyl-tRNA synthetase beta subunit family. Type 2 subfamily. As to quaternary structure, tetramer of two alpha and two beta subunits. It depends on Mg(2+) as a cofactor.

It localises to the cytoplasm. The catalysed reaction is tRNA(Phe) + L-phenylalanine + ATP = L-phenylalanyl-tRNA(Phe) + AMP + diphosphate + H(+). The sequence is that of Phenylalanine--tRNA ligase beta subunit from Thermococcus onnurineus (strain NA1).